The primary structure comprises 334 residues: Methionine adenosyltransferase 2 subunit beta (334 aa).

NADP(+) is bound by residues 37–40 (TGLL), 60–62 (YSR), 71–72 (NL), Cys-93, Arg-97, and Tyr-159. Positions 319-334 (LWPFLVDKRWRQTVFH) are required for interaction with MAT2A.

This sequence belongs to the dTDP-4-dehydrorhamnose reductase family. MAT2B subfamily. Heterotrimer; composed of a catalytic mat2a homodimer that binds one regulatory mat2b chain. Heterohexamer; composed of a central, catalytic mat2a homotetramer flanked on either side by a regulatory mat2b chain. NADP binding increases the affinity for mat2a.

It participates in amino-acid biosynthesis; S-adenosyl-L-methionine biosynthesis; S-adenosyl-L-methionine from L-methionine: step 1/1. In terms of biological role, regulatory subunit of S-adenosylmethionine synthetase 2, an enzyme that catalyzes the formation of S-adenosylmethionine from methionine and ATP. Regulates MAT2A catalytic activity by changing its kinetic properties, increasing its affinity for L-methionine. Can bind NADP (in vitro). This is Methionine adenosyltransferase 2 subunit beta (mat2b) from Xenopus laevis (African clawed frog).